Consider the following 101-residue polypeptide: Large ribosomal subunit protein bL28 (101 aa).

Belongs to the bacterial ribosomal protein bL28 family.

This Methylorubrum extorquens (strain CM4 / NCIMB 13688) (Methylobacterium extorquens) protein is Large ribosomal subunit protein bL28.